We begin with the raw amino-acid sequence, 746 residues long: Bud site selection protein 7 (746 aa).

The tract at residues 733–746 (LNFFTTCTIGCYDA) is CHS5-binding.

The protein belongs to the CHAPS family. In terms of assembly, component of the CHS5/6 complex composed of the 4 CHAPS proteins BCH1, BCH2v, BUD7, and CHS6 as well as at least CHS5 and GTP-bound ARF1. The complex interacts with the cargo protein CHS3.

The protein resides in the golgi apparatus. It is found in the trans-Golgi network membrane. In terms of biological role, member of the CHS5-ARF1P-binding proteins (CHAPS) which mediates export of specific cargo proteins, including chitin synthase CHS3. May be involved in positioning the proximal bud pole signal. The protein is Bud site selection protein 7 (BUD7) of Saccharomyces cerevisiae (strain ATCC 204508 / S288c) (Baker's yeast).